The primary structure comprises 523 residues: Frizzled-2 (523 aa).

The 120-residue stretch at 1-120 (PDHGFCQPIS…HGAEQICVGQ (120 aa)) folds into the FZ domain. Over 1–205 (PDHGFCQPIS…EDEIRFARVW (205 aa)) the chain is Extracellular. Disulfide bonds link C6–C67, C14–C60, C51–C88, C77–C117, and C81–C105. N-linked (GlcNAc...) asparagine glycosylation is present at N20. N121 is a glycosylation site (N-linked (GlcNAc...) asparagine). A helical membrane pass occupies residues 206–226 (ILVWSVLCCASTFFTVTTYLV). Topologically, residues 227 to 237 (DMQRFRYPERP) are cytoplasmic. Residues 238-258 (IIFLSGCYTMVSVAYIAGFVL) form a helical membrane-spanning segment. At 259-285 (EERVVCNERFQEDGYRTVVQGTKKEGC) the chain is on the extracellular side. Residues 286–306 (TILFMMLYFFSMASSIWWVIL) form a helical membrane-spanning segment. The Cytoplasmic segment spans residues 307-328 (SLTWFLAAGMKWGHEAIEANSQ). The helical transmembrane segment at 329-349 (YFHLAAWAVPAVKTITILAMG) threads the bilayer. Residues 350-372 (QIDGDLLSGVCFVGLNGIDPLRG) lie on the Extracellular side of the membrane. The helical transmembrane segment at 373 to 393 (FVLAPLFVYLFIGTSFLLAGF) threads the bilayer. Residues 394–419 (VSLFRIRTIMKHGGTKTEKLERLMVR) lie on the Cytoplasmic side of the membrane. A helical transmembrane segment spans residues 420–440 (IGVFSVLYTVPATIVIACYFY). Residues 441-477 (EQAFRQHWERSWISQHCKSLAIPCPLHFTPRMTPDFT) lie on the Extracellular side of the membrane. A helical transmembrane segment spans residues 478 to 498 (VYMIKYLMTLIVGITSGFWIF). Residues 499–523 (SGKTLHSWRKFYTRLTNSRQGETTV) are Cytoplasmic-facing. Positions 501-506 (KTLHSW) match the Lys-Thr-X-X-X-Trp motif, mediates interaction with the PDZ domain of Dvl family members motif. Residues 521–523 (TTV) carry the PDZ-binding motif.

Belongs to the G-protein coupled receptor Fz/Smo family. As to expression, expressed in the developing head and limbs. Expressed broadly in cranial ectoderm. Also expressed in the developing somites (dermomyotome) and in other cranial placodes, including the olfactory, lens, and otic placodes (rostral rim of the vesicle).

Its subcellular location is the membrane. It localises to the cell membrane. Functionally, receptor for Wnt proteins. Most of frizzled receptors are coupled to the beta-catenin canonical signaling pathway, which leads to the activation of disheveled proteins, inhibition of GSK-3 kinase, nuclear accumulation of beta-catenin and activation of Wnt target genes. A second signaling pathway involving PKC and calcium fluxes has been seen for some family members, but it is not yet clear if it represents a distinct pathway or if it can be integrated in the canonical pathway, as PKC seems to be required for Wnt-mediated inactivation of GSK-3 kinase. Both pathways seem to involve interactions with G-proteins. May be involved in transduction and intercellular transmission of polarity information during tissue morphogenesis and/or in differentiated tissues. In Gallus gallus (Chicken), this protein is Frizzled-2 (FZD2).